Consider the following 372-residue polypeptide: Glutamate 5-kinase (372 aa).

K14 is an ATP binding site. The substrate site is built by S54, D141, and N153. ATP is bound by residues 173–174 and 215–221; these read TD and TGGMATK. Positions 280-358 constitute a PUA domain; it reads KGKLVLDVGA…DEIESLLGYD (79 aa).

This sequence belongs to the glutamate 5-kinase family.

It is found in the cytoplasm. It catalyses the reaction L-glutamate + ATP = L-glutamyl 5-phosphate + ADP. Its pathway is amino-acid biosynthesis; L-proline biosynthesis; L-glutamate 5-semialdehyde from L-glutamate: step 1/2. Functionally, catalyzes the transfer of a phosphate group to glutamate to form L-glutamate 5-phosphate. The protein is Glutamate 5-kinase of Shewanella woodyi (strain ATCC 51908 / MS32).